Reading from the N-terminus, the 571-residue chain is Proline--tRNA ligase (571 aa).

This sequence belongs to the class-II aminoacyl-tRNA synthetase family. ProS type 1 subfamily. Homodimer.

The protein resides in the cytoplasm. It catalyses the reaction tRNA(Pro) + L-proline + ATP = L-prolyl-tRNA(Pro) + AMP + diphosphate. Its function is as follows. Catalyzes the attachment of proline to tRNA(Pro) in a two-step reaction: proline is first activated by ATP to form Pro-AMP and then transferred to the acceptor end of tRNA(Pro). As ProRS can inadvertently accommodate and process non-cognate amino acids such as alanine and cysteine, to avoid such errors it has two additional distinct editing activities against alanine. One activity is designated as 'pretransfer' editing and involves the tRNA(Pro)-independent hydrolysis of activated Ala-AMP. The other activity is designated 'posttransfer' editing and involves deacylation of mischarged Ala-tRNA(Pro). The misacylated Cys-tRNA(Pro) is not edited by ProRS. This Syntrophotalea carbinolica (strain DSM 2380 / NBRC 103641 / GraBd1) (Pelobacter carbinolicus) protein is Proline--tRNA ligase.